A 180-amino-acid polypeptide reads, in one-letter code: uncharacterized protein (180 aa).

The segment covering 114 to 136 has biased composition (basic and acidic residues); sequence DKISESDSLPDEYKEYVVKHDSD. Positions 114 to 180 are disordered; that stretch reads DKISESDSLP…NFDNPDDNPK (67 aa). Positions 137–146 are enriched in acidic residues; that stretch reads NSDNDSDNSD. Positions 147–173 are enriched in low complexity; that stretch reads NDSNNSDNDSNNSDSDSDNSNDPNNFD.

This is an uncharacterized protein from Acanthamoeba polyphaga (Amoeba).